We begin with the raw amino-acid sequence, 279 residues long: Aquaporin A (279 aa).

Residues 1 to 40 are Cytoplasmic-facing; that stretch reads MVKVVPLRFITYDPLKDPSKMIYRRPISKPVKAFKGFFSE. A helical membrane pass occupies residues 41–61; that stretch reads FLGTLYLVYFCGGSVCAAFAV. The Extracellular portion of the chain corresponds to 62-69; it reads AGDSAARA. The chain crosses the membrane as a helical span at residues 70–90; it reads LLGGLIQGMALAALIWAVSGV. The Cytoplasmic portion of the chain corresponds to 91-114; the sequence is SGCNLNPAVTLANLLSGRVGLIDS. The short motif at 96–98 is the NPA 1 element; that stretch reads NPA. Residues 115-135 form a helical membrane-spanning segment; sequence LYYVAAQILGCIAGAGILYGC. The Extracellular segment spans residues 136-158; it reads LPNMYRIDLGVPHLAPGMNTGQA. The helical transmembrane segment at 159-179 threads the bilayer; that stretch reads FLMEMMLTSILCLCVLGTSVF. Residues 180 to 188 are Cytoplasmic-facing; the sequence is NVWDRRLNR. Residues 189–209 traverse the membrane as a helical segment; that stretch reads IAPFAIGLALFIGVAIGFNFS. The Extracellular segment spans residues 210–227; it reads GGALNPVRVLGPSIISGV. The short motif at 214–216 is the NPA 2 element; sequence NPV. Residues 228-248 traverse the membrane as a helical segment; that stretch reads WSHHWVYWLGPIVGAILAAFI. The Cytoplasmic portion of the chain corresponds to 249–279; the sequence is YRCLLQERFDVIERPGYIAPLIDPSTAVSSY.

The protein belongs to the MIP/aquaporin (TC 1.A.8) family.

Its subcellular location is the cell membrane. In terms of biological role, may form a water-specific channel. Required for prolonged spore survival on fruiting bodies. The chain is Aquaporin A (aqpA) from Dictyostelium discoideum (Social amoeba).